The sequence spans 255 residues: 1-(5-phosphoribosyl)-5-[(5-phosphoribosylamino)methylideneamino] imidazole-4-carboxamide isomerase (255 aa).

Catalysis depends on D8, which acts as the Proton acceptor. Catalysis depends on D129, which acts as the Proton donor.

Belongs to the HisA/HisF family.

The protein localises to the cytoplasm. The catalysed reaction is 1-(5-phospho-beta-D-ribosyl)-5-[(5-phospho-beta-D-ribosylamino)methylideneamino]imidazole-4-carboxamide = 5-[(5-phospho-1-deoxy-D-ribulos-1-ylimino)methylamino]-1-(5-phospho-beta-D-ribosyl)imidazole-4-carboxamide. It participates in amino-acid biosynthesis; L-histidine biosynthesis; L-histidine from 5-phospho-alpha-D-ribose 1-diphosphate: step 4/9. The sequence is that of 1-(5-phosphoribosyl)-5-[(5-phosphoribosylamino)methylideneamino] imidazole-4-carboxamide isomerase from Prochlorococcus marinus (strain MIT 9301).